A 72-amino-acid chain; its full sequence is MAVPKRRQSNAQSGMRAATWKRKALDAARNALSLGKSLTTRKSTGFYYPPAPVSENWDDEAKGFGKDLDAAE.

Positions 49-72 are disordered; it reads PPAPVSENWDDEAKGFGKDLDAAE. A compositionally biased stretch (basic and acidic residues) spans 59–72; sequence DEAKGFGKDLDAAE.

Belongs to the bacterial ribosomal protein bL32 family.

It is found in the plastid. The protein localises to the chloroplast. The protein is Large ribosomal subunit protein bL32c of Ostreococcus tauri.